A 418-amino-acid chain; its full sequence is Delta(14)-sterol reductase TM7SF2 (418 aa).

6 helical membrane passes run 13–35 (FGGP…HLLL), 62–81 (ALLL…LLPA), 102–124 (GFQA…LPLG), 129–148 (MLLP…SLLL), 255–277 (FGFM…QAQF), and 287–304 (LPMA…YYIF). NADP(+)-binding positions include lysine 311, arginine 315, leucine 338, tryptophan 343, and 350-351 (NY). A helical transmembrane segment spans residues 355–377 (LIMALAWSLPCGLSHLLPYFYVL). NADP(+) is bound by residues aspartate 390, 394 to 398 (CLQKY), and tyrosine 405.

It belongs to the ERG4/ERG24 family. As to expression, strongly expressed in liver, weaker in ovary, testis, kidney and brain.

It is found in the endoplasmic reticulum membrane. The protein localises to the microsome membrane. The enzyme catalyses 4,4-dimethyl-5alpha-cholesta-8,24-dien-3beta-ol + NADP(+) = 4,4-dimethyl-5alpha-cholesta-8,14,24-trien-3beta-ol + NADPH + H(+). It catalyses the reaction 5alpha-cholest-8,14-dien-3beta-ol + NADPH + H(+) = 5alpha-cholest-8-en-3beta-ol + NADP(+). The catalysed reaction is 4,4-dimethyl-8,14-cholestadien-3beta-ol + NADPH + H(+) = 4,4-dimethyl-5alpha-cholest-8-en-3beta-ol + NADP(+). Its pathway is steroid biosynthesis; cholesterol biosynthesis. Functionally, catalyzes the reduction of the C14-unsaturated bond of lanosterol, as part of the metabolic pathway leading to cholesterol biosynthesis. This is Delta(14)-sterol reductase TM7SF2 (Tm7sf2) from Mus musculus (Mouse).